Reading from the N-terminus, the 304-residue chain is Glycine--tRNA ligase alpha subunit (304 aa).

This sequence belongs to the class-II aminoacyl-tRNA synthetase family. As to quaternary structure, tetramer of two alpha and two beta subunits.

The protein localises to the cytoplasm. The catalysed reaction is tRNA(Gly) + glycine + ATP = glycyl-tRNA(Gly) + AMP + diphosphate. This chain is Glycine--tRNA ligase alpha subunit, found in Yersinia pseudotuberculosis serotype O:1b (strain IP 31758).